Reading from the N-terminus, the 37-residue chain is Large ribosomal subunit protein bL36B (37 aa).

The protein belongs to the bacterial ribosomal protein bL36 family.

The protein is Large ribosomal subunit protein bL36B of Saccharopolyspora erythraea (strain ATCC 11635 / DSM 40517 / JCM 4748 / NBRC 13426 / NCIMB 8594 / NRRL 2338).